A 316-amino-acid polypeptide reads, in one-letter code: Cytochrome c biogenesis protein CcsA (316 aa).

The next 8 helical transmembrane spans lie at 19 to 39 (VLTL…FSFW), 47 to 67 (SSIV…QLVF), 77 to 97 (ISNL…IQLL), 106 to 126 (LIQA…SFVL), 151 to 171 (VIMC…VVLL), 224 to 244 (TITF…VWAN), 258 to 275 (TWAF…HTRL), and 285 to 305 (AIIA…VNFL).

It belongs to the CcmF/CycK/Ccl1/NrfE/CcsA family. In terms of assembly, may interact with ccs1.

Its subcellular location is the cellular thylakoid membrane. In terms of biological role, required during biogenesis of c-type cytochromes (cytochrome c6 and cytochrome f) at the step of heme attachment. In Prochlorococcus marinus (strain SARG / CCMP1375 / SS120), this protein is Cytochrome c biogenesis protein CcsA.